Reading from the N-terminus, the 443-residue chain is Ribosomal protein uS12 methylthiotransferase RimO (443 aa).

In terms of domain architecture, MTTase N-terminal spans methionine 1–proline 114. [4Fe-4S] cluster is bound by residues cysteine 8, cysteine 44, cysteine 73, cysteine 145, cysteine 149, and cysteine 152. The Radical SAM core domain occupies leucine 131–arginine 372. Positions glutamine 375–valine 443 constitute a TRAM domain.

The protein belongs to the methylthiotransferase family. RimO subfamily. It depends on [4Fe-4S] cluster as a cofactor.

It localises to the cytoplasm. The catalysed reaction is L-aspartate(89)-[ribosomal protein uS12]-hydrogen + (sulfur carrier)-SH + AH2 + 2 S-adenosyl-L-methionine = 3-methylsulfanyl-L-aspartate(89)-[ribosomal protein uS12]-hydrogen + (sulfur carrier)-H + 5'-deoxyadenosine + L-methionine + A + S-adenosyl-L-homocysteine + 2 H(+). In terms of biological role, catalyzes the methylthiolation of an aspartic acid residue of ribosomal protein uS12. The protein is Ribosomal protein uS12 methylthiotransferase RimO of Cupriavidus necator (strain ATCC 17699 / DSM 428 / KCTC 22496 / NCIMB 10442 / H16 / Stanier 337) (Ralstonia eutropha).